Reading from the N-terminus, the 110-residue chain is Putative UPF0377 protein YKL223W (110 aa).

Belongs to the UPF0377 family.

This is Putative UPF0377 protein YKL223W from Saccharomyces cerevisiae (strain ATCC 204508 / S288c) (Baker's yeast).